The following is a 310-amino-acid chain: UDP-N-acetylenolpyruvoylglucosamine reductase (310 aa).

An FAD-binding PCMH-type domain is found at 31–216 (KIGGPADYFV…LRKIEELNQA (186 aa)). Residue Arg-180 is part of the active site. The active-site Proton donor is Ser-230. Residue Glu-300 is part of the active site.

It belongs to the MurB family. Requires FAD as cofactor.

It is found in the cytoplasm. It carries out the reaction UDP-N-acetyl-alpha-D-muramate + NADP(+) = UDP-N-acetyl-3-O-(1-carboxyvinyl)-alpha-D-glucosamine + NADPH + H(+). Its pathway is cell wall biogenesis; peptidoglycan biosynthesis. Cell wall formation. The polypeptide is UDP-N-acetylenolpyruvoylglucosamine reductase (Lachnoclostridium phytofermentans (strain ATCC 700394 / DSM 18823 / ISDg) (Clostridium phytofermentans)).